A 744-amino-acid chain; its full sequence is Elongation factor G, mitochondrial (744 aa).

The N-terminal 33 residues, 1–33, are a transit peptide targeting the mitochondrion; sequence MTISNLIRSRCSLAAAKSFLENVKSFSSHATFA. The tr-type G domain occupies 39–317; that stretch reads EKIRNIGISA…VLDYLPHPGE (279 aa). Residues 48-55, 115-119, and 169-172 each bind GTP; these read AHIDSGKT, DTPGH, and NKLD.

Belongs to the TRAFAC class translation factor GTPase superfamily. Classic translation factor GTPase family. EF-G/EF-2 subfamily.

It localises to the mitochondrion. It functions in the pathway protein biosynthesis; polypeptide chain elongation. In terms of biological role, mitochondrial GTPase that catalyzes the GTP-dependent ribosomal translocation step during translation elongation. During this step, the ribosome changes from the pre-translocational (PRE) to the post-translocational (POST) state as the newly formed A-site-bound peptidyl-tRNA and P-site-bound deacylated tRNA move to the P and E sites, respectively. Catalyzes the coordinated movement of the two tRNA molecules, the mRNA and conformational changes in the ribosome. This chain is Elongation factor G, mitochondrial, found in Anopheles gambiae (African malaria mosquito).